The primary structure comprises 294 residues: ATP synthase gamma chain (294 aa).

The protein belongs to the ATPase gamma chain family. In terms of assembly, F-type ATPases have 2 components, CF(1) - the catalytic core - and CF(0) - the membrane proton channel. CF(1) has five subunits: alpha(3), beta(3), gamma(1), delta(1), epsilon(1). CF(0) has three main subunits: a, b and c.

The protein resides in the cell membrane. In terms of biological role, produces ATP from ADP in the presence of a proton gradient across the membrane. The gamma chain is believed to be important in regulating ATPase activity and the flow of protons through the CF(0) complex. This chain is ATP synthase gamma chain, found in Opitutus terrae (strain DSM 11246 / JCM 15787 / PB90-1).